Consider the following 51-residue polypeptide: Large ribosomal subunit protein eL39 (51 aa).

The protein belongs to the eukaryotic ribosomal protein eL39 family.

In Sulfurisphaera tokodaii (strain DSM 16993 / JCM 10545 / NBRC 100140 / 7) (Sulfolobus tokodaii), this protein is Large ribosomal subunit protein eL39.